Consider the following 450-residue polypeptide: tRNA-2-methylthio-N(6)-dimethylallyladenosine synthase (450 aa).

Residues 7-127 enclose the MTTase N-terminal domain; the sequence is KKVFIKTYGC…LPDVLARVRG (121 aa). Cys-16, Cys-52, Cys-90, Cys-168, Cys-172, and Cys-175 together coordinate [4Fe-4S] cluster. The region spanning 154 to 388 is the Radical SAM core domain; the sequence is IKRGVTAFLT…LLLKQQQGFG (235 aa). One can recognise a TRAM domain in the interval 389 to 450; sequence SSLVGSTIDT…GYNSLFAELA (62 aa).

Belongs to the methylthiotransferase family. MiaB subfamily. As to quaternary structure, monomer. [4Fe-4S] cluster is required as a cofactor.

Its subcellular location is the cytoplasm. It catalyses the reaction N(6)-dimethylallyladenosine(37) in tRNA + (sulfur carrier)-SH + AH2 + 2 S-adenosyl-L-methionine = 2-methylsulfanyl-N(6)-dimethylallyladenosine(37) in tRNA + (sulfur carrier)-H + 5'-deoxyadenosine + L-methionine + A + S-adenosyl-L-homocysteine + 2 H(+). Catalyzes the methylthiolation of N6-(dimethylallyl)adenosine (i(6)A), leading to the formation of 2-methylthio-N6-(dimethylallyl)adenosine (ms(2)i(6)A) at position 37 in tRNAs that read codons beginning with uridine. This chain is tRNA-2-methylthio-N(6)-dimethylallyladenosine synthase, found in Mesorhizobium japonicum (strain LMG 29417 / CECT 9101 / MAFF 303099) (Mesorhizobium loti (strain MAFF 303099)).